We begin with the raw amino-acid sequence, 470 residues long: Ribulose bisphosphate carboxylase large chain (470 aa).

Substrate contacts are provided by asparagine 118 and threonine 168. The active-site Proton acceptor is lysine 170. Lysine 172 provides a ligand contact to substrate. 3 residues coordinate Mg(2+): lysine 196, aspartate 198, and glutamate 199. Lysine 196 carries the N6-carboxylysine modification. Histidine 289 (proton acceptor) is an active-site residue. 3 residues coordinate substrate: arginine 290, histidine 322, and serine 374. The Interacts with RbcX2 motif lies at 459–465 (EIKFEFD).

It belongs to the RuBisCO large chain family. Type I subfamily. Heterohexadecamer of 8 large chains and 8 small chains; disulfide-linked. The disulfide link is formed within the large subunit homodimers. Mg(2+) is required as a cofactor. In terms of processing, the disulfide bond which can form in the large chain dimeric partners within the hexadecamer appears to be associated with oxidative stress and protein turnover.

The protein localises to the carboxysome. The catalysed reaction is 2 (2R)-3-phosphoglycerate + 2 H(+) = D-ribulose 1,5-bisphosphate + CO2 + H2O. It catalyses the reaction D-ribulose 1,5-bisphosphate + O2 = 2-phosphoglycolate + (2R)-3-phosphoglycerate + 2 H(+). Its function is as follows. RuBisCO catalyzes two reactions: the carboxylation of D-ribulose 1,5-bisphosphate, the primary event in carbon dioxide fixation, as well as the oxidative fragmentation of the pentose substrate in the photorespiration process. Both reactions occur simultaneously and in competition at the same active site. This chain is Ribulose bisphosphate carboxylase large chain, found in Picosynechococcus sp. (strain ATCC 27264 / PCC 7002 / PR-6) (Agmenellum quadruplicatum).